We begin with the raw amino-acid sequence, 527 residues long: Phosphoenolpyruvate carboxykinase (ATP) (527 aa).

Arg55, Tyr191, and Lys197 together coordinate substrate. ATP-binding positions include Lys197, His216, and 232–240; that span reads GLSGTGKTT. Residues Lys197 and His216 each contribute to the Mn(2+) site. Asp253 contacts Mn(2+). ATP contacts are provided by Glu281, Arg318, and Thr443. Arg318 lines the substrate pocket.

The protein belongs to the phosphoenolpyruvate carboxykinase (ATP) family. Mn(2+) serves as cofactor.

The protein localises to the cytoplasm. The catalysed reaction is oxaloacetate + ATP = phosphoenolpyruvate + ADP + CO2. Its pathway is carbohydrate biosynthesis; gluconeogenesis. Functionally, involved in the gluconeogenesis. Catalyzes the conversion of oxaloacetate (OAA) to phosphoenolpyruvate (PEP) through direct phosphoryl transfer between the nucleoside triphosphate and OAA. The protein is Phosphoenolpyruvate carboxykinase (ATP) of Brevibacillus brevis (strain 47 / JCM 6285 / NBRC 100599).